Consider the following 128-residue polypeptide: Protein Wnt-8 (128 aa).

Serine 1 is lipidated: O-palmitoleoyl serine. Cystine bridges form between cysteine 69–cysteine 109 and cysteine 85–cysteine 102. Asparagine 72 carries an N-linked (GlcNAc...) asparagine glycan.

This sequence belongs to the Wnt family. Palmitoleoylation is required for efficient binding to frizzled receptors. Depalmitoleoylation leads to Wnt signaling pathway inhibition. In terms of processing, proteolytic processing by tiki1 and tiki2 promotes oxidation and formation of large disulfide-bond oligomers, leading to inactivation of wnt8.

The protein localises to the secreted. It localises to the extracellular space. It is found in the extracellular matrix. Ligand for members of the frizzled family of seven transmembrane receptors. Probable developmental protein. May be a signaling molecule which affects the development of discrete regions of tissues. Is likely to signal over only few cell diameters. The chain is Protein Wnt-8 (WNT-8) from Evasterias troschelii (Mottled sea star).